The chain runs to 234 residues: Glucosamine-6-phosphate deaminase (234 aa).

D62 acts as the Proton acceptor; for enolization step in catalysis. The active-site For ring-opening step is the N128. H130 acts as the Proton acceptor; for ring-opening step in catalysis. The active-site For ring-opening step is E135.

This sequence belongs to the glucosamine/galactosamine-6-phosphate isomerase family. NagB subfamily.

It catalyses the reaction alpha-D-glucosamine 6-phosphate + H2O = beta-D-fructose 6-phosphate + NH4(+). The protein operates within amino-sugar metabolism; N-acetylneuraminate degradation; D-fructose 6-phosphate from N-acetylneuraminate: step 5/5. In terms of biological role, catalyzes the reversible isomerization-deamination of glucosamine 6-phosphate (GlcN6P) to form fructose 6-phosphate (Fru6P) and ammonium ion. This chain is Glucosamine-6-phosphate deaminase, found in Streptococcus pyogenes serotype M3 (strain ATCC BAA-595 / MGAS315).